A 544-amino-acid chain; its full sequence is Chaperonin GroEL (544 aa).

Residues 30-33 (TLGP), lysine 51, 87-91 (DGTTT), glycine 415, 479-481 (NAA), and aspartate 495 each bind ATP. Residues 525–537 (PQDTPATAAAPDM) are compositionally biased toward low complexity. The disordered stretch occupies residues 525 to 544 (PQDTPATAAAPDMGGMGGMM).

Belongs to the chaperonin (HSP60) family. In terms of assembly, forms a cylinder of 14 subunits composed of two heptameric rings stacked back-to-back. Interacts with the co-chaperonin GroES.

The protein localises to the cytoplasm. The catalysed reaction is ATP + H2O + a folded polypeptide = ADP + phosphate + an unfolded polypeptide.. Functionally, together with its co-chaperonin GroES, plays an essential role in assisting protein folding. The GroEL-GroES system forms a nano-cage that allows encapsulation of the non-native substrate proteins and provides a physical environment optimized to promote and accelerate protein folding. The polypeptide is Chaperonin GroEL (Ruthia magnifica subsp. Calyptogena magnifica).